The chain runs to 266 residues: 3-methyl-2-oxobutanoate hydroxymethyltransferase (266 aa).

Residues aspartate 45 and aspartate 84 each coordinate Mg(2+). Residues 45–46, aspartate 84, and lysine 112 contribute to the 3-methyl-2-oxobutanoate site; that span reads DS. Mg(2+) is bound at residue glutamate 114. The active-site Proton acceptor is the glutamate 181.

This sequence belongs to the PanB family. In terms of assembly, homodecamer; pentamer of dimers. Mg(2+) is required as a cofactor.

Its subcellular location is the cytoplasm. It carries out the reaction 3-methyl-2-oxobutanoate + (6R)-5,10-methylene-5,6,7,8-tetrahydrofolate + H2O = 2-dehydropantoate + (6S)-5,6,7,8-tetrahydrofolate. The protein operates within cofactor biosynthesis; (R)-pantothenate biosynthesis; (R)-pantoate from 3-methyl-2-oxobutanoate: step 1/2. Functionally, catalyzes the reversible reaction in which hydroxymethyl group from 5,10-methylenetetrahydrofolate is transferred onto alpha-ketoisovalerate to form ketopantoate. The polypeptide is 3-methyl-2-oxobutanoate hydroxymethyltransferase (Pseudomonas syringae pv. tomato (strain ATCC BAA-871 / DC3000)).